The chain runs to 365 residues: Peptide chain release factor 2 (365 aa).

The residue at position 252 (Gln-252) is an N5-methylglutamine.

It belongs to the prokaryotic/mitochondrial release factor family. Methylated by PrmC. Methylation increases the termination efficiency of RF2.

It localises to the cytoplasm. Its function is as follows. Peptide chain release factor 2 directs the termination of translation in response to the peptide chain termination codons UGA and UAA. The polypeptide is Peptide chain release factor 2 (Colwellia psychrerythraea (strain 34H / ATCC BAA-681) (Vibrio psychroerythus)).